We begin with the raw amino-acid sequence, 327 residues long: Cyclic AMP-responsive element-binding protein 1 (327 aa).

Disordered regions lie at residues 1-27 and 94-113; these read MTME…QMTV and SEDS…RREI. In terms of domain architecture, KID spans 87-146; that stretch reads QISTIAESEDSQESVDSVTDSQKRREILSRRPSYRKILNDLSSDAPGVPRIEEEKSEEET. Phosphoserine; by CaMK1, CaMK2, CaMK4, PKB/AKT1 or PKB/AKT2, RPS6KA3, RPS6KA4, RPS6KA5 and SGK1 is present on Ser119. Lys122 is covalently cross-linked (Glycyl lysine isopeptide (Lys-Gly) (interchain with G-Cter in SUMO2)). A disordered region spans residues 126-151; the sequence is DLSSDAPGVPRIEEEKSEEETSAPAI. Position 128 is a phosphoserine; by CaMK2 (Ser128). Ser257 is modified (phosphoserine; by HIPK2). Residues 269-327 form the bZIP domain; that stretch reads ARKREVRLMKNREAARECRRKKKEYVKCLENRVAVLENQNKTLIEELKALKDLYCHKSD. Residues 270–295 form a basic motif region; that stretch reads RKREVRLMKNREAARECRRKKKEYVK. Residues Lys271 and Lys290 each participate in a glycyl lysine isopeptide (Lys-Gly) (interchain with G-Cter in SUMO1) cross-link. Residues 297–318 form a leucine-zipper region; that stretch reads LENRVAVLENQNKTLIEELKAL.

It belongs to the bZIP family. In terms of assembly, interacts with PPRC1. Binds DNA as a dimer. This dimer is stabilized by magnesium ions. Interacts, through the bZIP domain, with the coactivators CRTC1/TORC1, CRTC2/TORC2 and CRTC3/TORC3. Interacts (phosphorylated form) with TOX3. When phosphorylated on Ser-119, binds CREBBP. Interacts with ARRB1. Binds to HIPK2. Interacts with SGK1. Interacts with CREBL2; regulates CREB1 phosphorylation, stability and transcriptional activity. Interacts with TSSK4; this interaction facilitates phosphorylation on Ser-119. Forms a complex with KMT2A and CREBBP. Interacts with TOX4; CREB1 is required for full induction of TOX4-dependent activity and the interaction is increased by cAMP and inhibited by insulin. Phosphorylation of Ser-119 allows CREBBP binding. Stimulated by phosphorylation. Phosphorylated Ser-128 can be detected in the suprachiasmatic nucleus (SCN), the amygdala, the cortex, and the hippocampus but not in the striatum nor in the cerebellum. In the SCN, phosphorylation of Ser-128 and Ser-119 are stimulated by light exposure and submitted to circadian oscillations. In the retina, only phosphorylation of Ser-119 can be detected upon light exposure. Phosphorylation of both Ser-119 and Ser-128 in the SCN regulates the activity of CREB and participates in circadian rhythm generation. Phosphorylated upon calcium influx by CaMK4 and CaMK2 on Ser-119. CaMK4 is much more potent than CAMK2 in activating CREB. Phosphorylated by CaMK2 on Ser-128. Phosphorylation of Ser-128 blocks CREB-mediated transcription even when Ser-119 is phosphorylated. Phosphorylated by CaMK1. Phosphorylation of Ser-271 by HIPK2 in response to genotoxic stress promotes CREB1 activity, facilitating the recruitment of the coactivator CBP. Phosphorylated at Ser-119 by RPS6KA3, RPS6KA4 and RPS6KA5 in response to mitogenic or stress stimuli. CREBL2 positively regulates phosphorylation at Ser-119 thereby stimulating CREB1 transcriptional activity. In liver, phosphorylation is induced by fasting or glucagon in a circadian fashion. Phosphorylated by TSSK4 on Ser-119. In terms of processing, sumoylated with SUMO1. Sumoylation on Lys-290, but not on Lys-271, is required for nuclear localization of this protein. Sumoylation is enhanced under hypoxia, promoting nuclear localization and stabilization. Expressed in the heart (at protein level).

The protein resides in the nucleus. Functionally, phosphorylation-dependent transcription factor that stimulates transcription upon binding to the DNA cAMP response element (CRE), a sequence present in many viral and cellular promoters. Transcription activation is enhanced by the TORC coactivators which act independently of Ser-119 phosphorylation. Involved in different cellular processes including the synchronization of circadian rhythmicity and the differentiation of adipose cells. Regulates the expression of apoptotic and inflammatory response factors in cardiomyocytes in response to ERFE-mediated activation of AKT signaling. This chain is Cyclic AMP-responsive element-binding protein 1 (Creb1), found in Mus musculus (Mouse).